A 241-amino-acid chain; its full sequence is Uridylate kinase (241 aa).

15–18 lines the ATP pocket; it reads KLSG. An involved in allosteric activation by GTP region spans residues 23 to 28; sequence GTEGFG. Residue glycine 57 coordinates UMP. 2 residues coordinate ATP: glycine 58 and arginine 62. UMP is bound by residues aspartate 77 and 138 to 145; that span reads TGNPFFTT. 3 residues coordinate ATP: threonine 165, tyrosine 171, and aspartate 174.

The protein belongs to the UMP kinase family. Homohexamer.

Its subcellular location is the cytoplasm. The catalysed reaction is UMP + ATP = UDP + ADP. Its pathway is pyrimidine metabolism; CTP biosynthesis via de novo pathway; UDP from UMP (UMPK route): step 1/1. Allosterically activated by GTP. Inhibited by UTP. Functionally, catalyzes the reversible phosphorylation of UMP to UDP. This Pectobacterium atrosepticum (strain SCRI 1043 / ATCC BAA-672) (Erwinia carotovora subsp. atroseptica) protein is Uridylate kinase.